The following is a 377-amino-acid chain: uncharacterized protein (377 aa).

The signal sequence occupies residues 1–23; the sequence is MLKFRNFFKLTLLTLASAFFLSG. C24 is lipidated: N-palmitoyl cysteine. C24 is lipidated: S-diacylglycerol cysteine.

Its subcellular location is the cell membrane. This is an uncharacterized protein from Mycoplasma genitalium (strain ATCC 33530 / DSM 19775 / NCTC 10195 / G37) (Mycoplasmoides genitalium).